Here is a 240-residue protein sequence, read N- to C-terminus: Dephospho-CoA kinase domain-containing protein (240 aa).

The DPCK domain maps to 3–207 (LVGLTGGIAS…RSMEYLPLRL (205 aa)). 8-15 (GGIASGKS) lines the ATP pocket.

It belongs to the CoaE family.

The sequence is that of Dephospho-CoA kinase domain-containing protein (Dcakd) from Rattus norvegicus (Rat).